Here is a 767-residue protein sequence, read N- to C-terminus: Golgin subfamily A member 1 (767 aa).

The disordered stretch occupies residues 13 to 58; the sequence is TAVAQRPGGATRIPRSVSKESVASMGADSGDDFASDGSSSREDLSS. Serine 30, serine 36, serine 41, serine 47, serine 50, and serine 51 each carry phosphoserine. Residues 50–657 are a coiled coil; the sequence is SSSREDLSSQ…RKTLQKELKI (608 aa). The region spanning 688 to 737 is the GRIP domain; sequence TDAREINFEYLKHVVLKFMSCRESEAFHLIKAVSVLLNFSQEEENMLKET. The interval 748–767 is disordered; the sequence is KPAPKGSIRPSISNPRIPWS.

In terms of assembly, interacts with RAB6A. Directly interacts with TBC1D23. Interacts with FAM91A1; this interaction may be mediated by TBC1D23. Interacts with ARL1; this interaction recruits Golgin-97/GOLGA1 onto the Golgi apparatus. MARylated by PARP12; MARylation is required for basolateral export of E-Cadherin.

The protein resides in the golgi apparatus membrane. The protein localises to the golgi apparatus. It localises to the trans-Golgi network membrane. Its subcellular location is the cytoplasmic vesicle. It is found in the secretory vesicle. The protein resides in the acrosome. In terms of biological role, involved in vesicular trafficking at the Golgi apparatus level. Involved in endosome-to-Golgi trafficking. Mechanistically, captures transport vesicles arriving from endosomes via the protein TBC1D23. Recognized vesicles are then tethered to the trans-Golgi before subsequent SNARE engagement and vesicle fusion. Selectively regulates E-cadherin transport from the trans-Golgi network in tubulovesicular carriers. (Microbial infection) Plays an important role in poxvirus morphogenesis. Translocates into the viral factories where it may transport the membrane fragments and associated protein factors important for virus maturation to the sites of virion assembly. The chain is Golgin subfamily A member 1 (GOLGA1) from Homo sapiens (Human).